A 358-amino-acid polypeptide reads, in one-letter code: Variant-surface-glycoprotein phospholipase C (358 aa).

The PI-PLC X-box domain occupies 25-198; sequence IGQVYMVGAH…STRRIFLVVR (174 aa).

As to quaternary structure, monomer. The N-terminus is blocked.

Its subcellular location is the membrane. The catalysed reaction is a 6-(alpha-D-glucosaminyl)-1-(1,2-diacyl-sn-glycero-3-phospho)-1D-myo-inositol = 6-(alpha-D-glucosaminyl)-1D-myo-inositol 1,2-cyclic phosphate + a 1,2-diacyl-sn-glycerol. Functionally, by hydrolysis of the attached glycolipid, releases soluble variant surface glycoprotein containing phosphoinositol from the cell wall of T.brucei after cell lysis. It also cleaves similar membrane anchors on some mammalian proteins. VSG lipase may play a role in processes such as parasite differentiation or antigenic variation. This chain is Variant-surface-glycoprotein phospholipase C, found in Trypanosoma brucei brucei.